The chain runs to 441 residues: tRNA (guanine(37)-N(1))-methyltransferase (441 aa).

The transit peptide at 1–9 (MFAPPAARA) directs the protein to the mitochondrion. S-adenosyl-L-methionine contacts are provided by residues R221, 248-249 (DL), 276-277 (DG), and N331.

It belongs to the class I-like SAM-binding methyltransferase superfamily. TRM5/TYW2 family. As to quaternary structure, monomer.

The protein resides in the mitochondrion matrix. Its subcellular location is the nucleus. It is found in the cytoplasm. It carries out the reaction guanosine(37) in tRNA + S-adenosyl-L-methionine = N(1)-methylguanosine(37) in tRNA + S-adenosyl-L-homocysteine + H(+). In terms of biological role, specifically methylates the N1 position of guanosine-37 in various cytoplasmic and mitochondrial tRNAs. Methylation is not dependent on the nature of the nucleoside 5' of the target nucleoside. This is the first step in the biosynthesis of wybutosine (yW), a modified base adjacent to the anticodon of tRNAs and required for accurate decoding. This is tRNA (guanine(37)-N(1))-methyltransferase from Phaeosphaeria nodorum (strain SN15 / ATCC MYA-4574 / FGSC 10173) (Glume blotch fungus).